A 94-amino-acid polypeptide reads, in one-letter code: MSKSIKHANTIRLPDTADQFARRVHINVRGEKVTMVYRWKDHKSPKAHTQRMTLDDKQVGRLMGALTMAADNVVGDNRERLVEFGAGMQEIIEK.

This chain is Gene 4.5 protein (4.5), found in Enterobacteria phage T3 (Bacteriophage T3).